We begin with the raw amino-acid sequence, 590 residues long: Glutamine--tRNA ligase (590 aa).

Residues Pro55 to His65 carry the 'HIGH' region motif. Residues Glu56–Asn58 and His62–Ser68 each bind ATP. L-glutamine is bound by residues Asp93 and Tyr238. ATP is bound by residues Thr257 and Arg292–Leu293. Positions Ile299–Arg303 match the 'KMSKS' region motif.

This sequence belongs to the class-I aminoacyl-tRNA synthetase family. Monomer.

The protein resides in the cytoplasm. The catalysed reaction is tRNA(Gln) + L-glutamine + ATP = L-glutaminyl-tRNA(Gln) + AMP + diphosphate. The sequence is that of Glutamine--tRNA ligase from Polynucleobacter necessarius subsp. necessarius (strain STIR1).